Consider the following 304-residue polypeptide: Protoheme IX farnesyltransferase 1 (304 aa).

Transmembrane regions (helical) follow at residues 24 to 44, 47 to 67, 99 to 119, 122 to 142, 150 to 170, 176 to 196, 228 to 248, and 280 to 300; these read VVVL…KAPL, FVPW…AGAA, MALG…LAFT, LTAW…TGFL, IVIG…AITG, PLLL…ALCI, LVLF…LVYL, and YSIV…YLPL.

Belongs to the UbiA prenyltransferase family. Protoheme IX farnesyltransferase subfamily.

Its subcellular location is the cell inner membrane. The catalysed reaction is heme b + (2E,6E)-farnesyl diphosphate + H2O = Fe(II)-heme o + diphosphate. It functions in the pathway porphyrin-containing compound metabolism; heme O biosynthesis; heme O from protoheme: step 1/1. Functionally, converts heme B (protoheme IX) to heme O by substitution of the vinyl group on carbon 2 of heme B porphyrin ring with a hydroxyethyl farnesyl side group. In Pseudomonas paraeruginosa (strain DSM 24068 / PA7) (Pseudomonas aeruginosa (strain PA7)), this protein is Protoheme IX farnesyltransferase 1.